We begin with the raw amino-acid sequence, 508 residues long: Histidine--tRNA ligase, cytoplasmic (508 aa).

The WHEP-TRS domain occupies 3–59 (SPALEELVLNSRHRLVRGLKQQKASADQIEEEVAKLLKLKAQLGHDESKQKFVLKTP). Ser-66 carries the post-translational modification Phosphoserine. Residues 130 to 132 (DLT), Arg-157, Asp-177, Arg-326, and 330 to 331 (YY) contribute to the L-histidine site.

This sequence belongs to the class-II aminoacyl-tRNA synthetase family. Homodimer.

The protein resides in the cytoplasm. It catalyses the reaction tRNA(His) + L-histidine + ATP = L-histidyl-tRNA(His) + AMP + diphosphate + H(+). In terms of biological role, catalyzes the ATP-dependent ligation of histidine to the 3'-end of its cognate tRNA, via the formation of an aminoacyl-adenylate intermediate (His-AMP). Plays a role in axon guidance. The chain is Histidine--tRNA ligase, cytoplasmic (HARS1) from Mesocricetus auratus (Golden hamster).